A 440-amino-acid chain; its full sequence is L-seryl-tRNA(Sec) selenium transferase (440 aa).

Residue K282 is modified to N6-(pyridoxal phosphate)lysine.

It belongs to the SelA family. It depends on pyridoxal 5'-phosphate as a cofactor.

Its subcellular location is the cytoplasm. It carries out the reaction L-seryl-tRNA(Sec) + selenophosphate + H(+) = L-selenocysteinyl-tRNA(Sec) + phosphate. The protein operates within aminoacyl-tRNA biosynthesis; selenocysteinyl-tRNA(Sec) biosynthesis; selenocysteinyl-tRNA(Sec) from L-seryl-tRNA(Sec) (bacterial route): step 1/1. In terms of biological role, converts seryl-tRNA(Sec) to selenocysteinyl-tRNA(Sec) required for selenoprotein biosynthesis. This chain is L-seryl-tRNA(Sec) selenium transferase, found in Campylobacter jejuni subsp. jejuni serotype O:6 (strain 81116 / NCTC 11828).